We begin with the raw amino-acid sequence, 208 residues long: Cytochrome c biogenesis ATP-binding export protein CcmA (208 aa).

Residues leucine 3 to lysine 206 form the ABC transporter domain. Glycine 35 to serine 42 contributes to the ATP binding site.

This sequence belongs to the ABC transporter superfamily. CcmA exporter (TC 3.A.1.107) family. The complex is composed of two ATP-binding proteins (CcmA) and two transmembrane proteins (CcmB).

The protein localises to the cell inner membrane. The enzyme catalyses heme b(in) + ATP + H2O = heme b(out) + ADP + phosphate + H(+). In terms of biological role, part of the ABC transporter complex CcmAB involved in the biogenesis of c-type cytochromes; once thought to export heme, this seems not to be the case, but its exact role is uncertain. Responsible for energy coupling to the transport system. This chain is Cytochrome c biogenesis ATP-binding export protein CcmA, found in Bartonella henselae (strain ATCC 49882 / DSM 28221 / CCUG 30454 / Houston 1) (Rochalimaea henselae).